We begin with the raw amino-acid sequence, 490 residues long: Aspartyl/glutamyl-tRNA(Asn/Gln) amidotransferase subunit B (490 aa).

The protein belongs to the GatB/GatE family. GatB subfamily. As to quaternary structure, heterotrimer of A, B and C subunits.

It carries out the reaction L-glutamyl-tRNA(Gln) + L-glutamine + ATP + H2O = L-glutaminyl-tRNA(Gln) + L-glutamate + ADP + phosphate + H(+). It catalyses the reaction L-aspartyl-tRNA(Asn) + L-glutamine + ATP + H2O = L-asparaginyl-tRNA(Asn) + L-glutamate + ADP + phosphate + 2 H(+). Its function is as follows. Allows the formation of correctly charged Asn-tRNA(Asn) or Gln-tRNA(Gln) through the transamidation of misacylated Asp-tRNA(Asn) or Glu-tRNA(Gln) in organisms which lack either or both of asparaginyl-tRNA or glutaminyl-tRNA synthetases. The reaction takes place in the presence of glutamine and ATP through an activated phospho-Asp-tRNA(Asn) or phospho-Glu-tRNA(Gln). The chain is Aspartyl/glutamyl-tRNA(Asn/Gln) amidotransferase subunit B from Burkholderia thailandensis (strain ATCC 700388 / DSM 13276 / CCUG 48851 / CIP 106301 / E264).